Reading from the N-terminus, the 272-residue chain is 3-methyl-2-oxobutanoate hydroxymethyltransferase (272 aa).

Mg(2+) contacts are provided by D52 and D91. 3-methyl-2-oxobutanoate-binding positions include 52 to 53 (DS), D91, and K121. Position 123 (E123) interacts with Mg(2+). E190 acts as the Proton acceptor in catalysis.

Belongs to the PanB family. Homodecamer; pentamer of dimers. The cofactor is Mg(2+).

The protein resides in the cytoplasm. It catalyses the reaction 3-methyl-2-oxobutanoate + (6R)-5,10-methylene-5,6,7,8-tetrahydrofolate + H2O = 2-dehydropantoate + (6S)-5,6,7,8-tetrahydrofolate. It functions in the pathway cofactor biosynthesis; (R)-pantothenate biosynthesis; (R)-pantoate from 3-methyl-2-oxobutanoate: step 1/2. In terms of biological role, catalyzes the reversible reaction in which hydroxymethyl group from 5,10-methylenetetrahydrofolate is transferred onto alpha-ketoisovalerate to form ketopantoate. This is 3-methyl-2-oxobutanoate hydroxymethyltransferase from Christiangramia forsetii (strain DSM 17595 / CGMCC 1.15422 / KT0803) (Gramella forsetii).